Here is a 428-residue protein sequence, read N- to C-terminus: Histidinol dehydrogenase (428 aa).

Positions 127, 185, and 208 each coordinate NAD(+). Substrate-binding residues include S234, Q256, and H259. The Zn(2+) site is built by Q256 and H259. Residues E323 and H324 each act as proton acceptor in the active site. Substrate-binding residues include H324, D357, E411, and H416. D357 contacts Zn(2+). H416 contacts Zn(2+).

It belongs to the histidinol dehydrogenase family. It depends on Zn(2+) as a cofactor.

It carries out the reaction L-histidinol + 2 NAD(+) + H2O = L-histidine + 2 NADH + 3 H(+). The protein operates within amino-acid biosynthesis; L-histidine biosynthesis; L-histidine from 5-phospho-alpha-D-ribose 1-diphosphate: step 9/9. Its function is as follows. Catalyzes the sequential NAD-dependent oxidations of L-histidinol to L-histidinaldehyde and then to L-histidine. The polypeptide is Histidinol dehydrogenase (Mannheimia succiniciproducens (strain KCTC 0769BP / MBEL55E)).